A 589-amino-acid polypeptide reads, in one-letter code: Phenylalanine--tRNA ligase beta subunit (589 aa).

The B5 domain maps to 302–377 (LEVREERISV…IAYGYNNIKK (76 aa)). The Mg(2+) site is built by aspartate 355, aspartate 361, glutamate 364, and aspartate 365.

The protein belongs to the phenylalanyl-tRNA synthetase beta subunit family. Type 2 subfamily. In terms of assembly, tetramer of two alpha and two beta subunits. It depends on Mg(2+) as a cofactor.

It is found in the cytoplasm. It catalyses the reaction tRNA(Phe) + L-phenylalanine + ATP = L-phenylalanyl-tRNA(Phe) + AMP + diphosphate + H(+). The polypeptide is Phenylalanine--tRNA ligase beta subunit (Drosophila melanogaster (Fruit fly)).